We begin with the raw amino-acid sequence, 67 residues long: Large ribosomal subunit protein bL35 (67 aa).

It belongs to the bacterial ribosomal protein bL35 family.

In Rhizobium etli (strain CIAT 652), this protein is Large ribosomal subunit protein bL35.